A 289-amino-acid polypeptide reads, in one-letter code: MNIDGYTRLAAVVAKPIKHSISPFIHNLAFKETGVNGVYVAWEIPEEDLAVTLENIKRYDMFGINLSMPYKQAVIPYLDSLTDSARLIGAVNTVIHQDGLLIGHNTDGIGFFKSLEKLRGFQVRNKRLTILGGGGASTAIIAQATLDGAKEITIFCRQQSLERTQASLTPIARATGVPMQILALDDSQLLQEHITNSDLLVNGTSVGMDGYSQPVPSTIRFPENLLVADVIYQPFETPLLKLAQSQGNPTINGLGMLLFQAAEAFQSWTGQEMPTDLIWDQLVQKYDIK.

Residues 20–22 (SIS) and S67 contribute to the shikimate site. K71 functions as the Proton acceptor in the catalytic mechanism. D83 serves as a coordination point for NADP(+). Residues N92 and D107 each contribute to the shikimate site. Residues 132-136 (GGGGA) and V230 contribute to the NADP(+) site. Shikimate is bound at residue Y232. G253 is a binding site for NADP(+).

It belongs to the shikimate dehydrogenase family. Homodimer.

The catalysed reaction is shikimate + NADP(+) = 3-dehydroshikimate + NADPH + H(+). Its pathway is metabolic intermediate biosynthesis; chorismate biosynthesis; chorismate from D-erythrose 4-phosphate and phosphoenolpyruvate: step 4/7. Involved in the biosynthesis of the chorismate, which leads to the biosynthesis of aromatic amino acids. Catalyzes the reversible NADPH linked reduction of 3-dehydroshikimate (DHSA) to yield shikimate (SA). This is Shikimate dehydrogenase (NADP(+)) from Streptococcus suis (strain 98HAH33).